Consider the following 248-residue polypeptide: ATP synthase subunit a, chloroplastic (248 aa).

The next 5 helical transmembrane spans lie at A37–A57, V96–F116, I135–H155, L200–L220, and G221–G241.

The protein belongs to the ATPase A chain family. As to quaternary structure, F-type ATPases have 2 components, CF(1) - the catalytic core - and CF(0) - the membrane proton channel. CF(1) has five subunits: alpha(3), beta(3), gamma(1), delta(1), epsilon(1). CF(0) has four main subunits: a, b, b' and c.

The protein resides in the plastid. Its subcellular location is the chloroplast thylakoid membrane. Its function is as follows. Key component of the proton channel; it plays a direct role in the translocation of protons across the membrane. The protein is ATP synthase subunit a, chloroplastic of Marchantia polymorpha (Common liverwort).